The chain runs to 491 residues: Probable protein phosphatase 2C 6 (491 aa).

Positions 1-16 are enriched in basic and acidic residues; sequence MGLCHSKIDKTTRKET. The disordered stretch occupies residues 1–39; it reads MGLCHSKIDKTTRKETGATSTATTTVERQSSGRLRRPRD. Positions 17–28 are enriched in low complexity; the sequence is GATSTATTTVER. Residues 64–376 form the PPM-type phosphatase domain; the sequence is IACLYTQQGK…DDCAVVCLFL (313 aa). Mn(2+) is bound by residues Asp100, Gly101, Asp321, and Asp367. The segment at 391-422 is disordered; that stretch reads VNHSHEESTESVTITSSKDADKKEEASTETNE.

This sequence belongs to the PP2C family. Requires Mg(2+) as cofactor. It depends on Mn(2+) as a cofactor.

It carries out the reaction O-phospho-L-seryl-[protein] + H2O = L-seryl-[protein] + phosphate. The enzyme catalyses O-phospho-L-threonyl-[protein] + H2O = L-threonyl-[protein] + phosphate. The protein is Probable protein phosphatase 2C 6 of Arabidopsis thaliana (Mouse-ear cress).